Reading from the N-terminus, the 185-residue chain is Peptidyl-tRNA hydrolase (185 aa).

Tyr-14 lines the tRNA pocket. His-19 serves as the catalytic Proton acceptor. 3 residues coordinate tRNA: Tyr-64, Asn-66, and Asn-112.

The protein belongs to the PTH family. As to quaternary structure, monomer.

It localises to the cytoplasm. The enzyme catalyses an N-acyl-L-alpha-aminoacyl-tRNA + H2O = an N-acyl-L-amino acid + a tRNA + H(+). Hydrolyzes ribosome-free peptidyl-tRNAs (with 1 or more amino acids incorporated), which drop off the ribosome during protein synthesis, or as a result of ribosome stalling. Its function is as follows. Catalyzes the release of premature peptidyl moieties from peptidyl-tRNA molecules trapped in stalled 50S ribosomal subunits, and thus maintains levels of free tRNAs and 50S ribosomes. This chain is Peptidyl-tRNA hydrolase, found in Exiguobacterium sibiricum (strain DSM 17290 / CCUG 55495 / CIP 109462 / JCM 13490 / 255-15).